We begin with the raw amino-acid sequence, 300 residues long: tRNA pseudouridine synthase B (300 aa).

Aspartate 38 functions as the Nucleophile in the catalytic mechanism.

The protein belongs to the pseudouridine synthase TruB family. Type 1 subfamily.

It catalyses the reaction uridine(55) in tRNA = pseudouridine(55) in tRNA. Responsible for synthesis of pseudouridine from uracil-55 in the psi GC loop of transfer RNAs. The sequence is that of tRNA pseudouridine synthase B from Anaplasma phagocytophilum (strain HZ).